The primary structure comprises 942 residues: AP-1 complex subunit beta (942 aa).

HEAT repeat units lie at residues 45–82 (KDVS…NHPD), 117–154 (NITE…VNPE), 156–193 (VENQ…VSKK), 273–313 (DVIR…KRPE), 384–421 (RASE…KYPN), and 458–495 (DNAH…KRPK). The tract at residues 590–700 (GLRNKEEEDE…NDLSFLGGGG (111 aa)) is disordered. Over residues 596–609 (EEDEEEPDYVDDDN) the composition is skewed to acidic residues. Composition is skewed to low complexity over residues 613-645 (QQGG…QQQP) and 664-677 (NNNN…NNNN). The span at 678 to 693 (MYSPQPQQFNGNSNDL) shows a compositional bias: polar residues.

This sequence belongs to the adaptor complexes large subunit family. As to quaternary structure, adaptor protein complex 1 (AP-1) is a heterotetramer composed of two large adaptins (gamma-type subunit and beta-type subunit), a medium adaptin (mu-type subunit) and a small adaptin (sigma-type subunit).

Its subcellular location is the golgi apparatus. It is found in the trans-Golgi network. The protein localises to the cytoplasmic vesicle. It localises to the clathrin-coated vesicle membrane. In terms of biological role, subunit of clathrin-associated adaptor protein complex 1 that plays a role in protein sorting in the trans-Golgi network (TGN) and endosomes. The AP complexes mediate the recruitment of clathrin to membranes and the recognition of sorting signals within the cytosolic tails of transmembrane cargo molecules. Also involved in early steps of phagocytosis and macropinocytosis. The sequence is that of AP-1 complex subunit beta (ap1b1) from Dictyostelium discoideum (Social amoeba).